The following is a 142-amino-acid chain: Alpha-lactalbumin (142 aa).

The N-terminal stretch at 1–19 is a signal peptide; that stretch reads MMSFVSLLLVGILFHATQA. The 123-residue stretch at 20 to 142 folds into the C-type lysozyme domain; it reads EQLTKCEVFQ…KLDQWLCEKL (123 aa). 4 cysteine pairs are disulfide-bonded: cysteine 25–cysteine 139, cysteine 47–cysteine 130, cysteine 80–cysteine 96, and cysteine 92–cysteine 110. 2 N-linked (GlcNAc...) asparagine glycosylation sites follow: asparagine 64 and asparagine 93. Positions 98, 101, 103, 106, and 107 each coordinate Ca(2+).

This sequence belongs to the glycosyl hydrolase 22 family. As to quaternary structure, lactose synthase (LS) is a heterodimer of a catalytic component, beta1,4-galactosyltransferase (beta4Gal-T1) and a regulatory component, alpha-lactalbumin (LA). As to expression, mammary gland specific. Secreted in milk.

The protein resides in the secreted. Functionally, regulatory subunit of lactose synthase, changes the substrate specificity of galactosyltransferase in the mammary gland making glucose a good acceptor substrate for this enzyme. This enables LS to synthesize lactose, the major carbohydrate component of milk. In other tissues, galactosyltransferase transfers galactose onto the N-acetylglucosamine of the oligosaccharide chains in glycoproteins. The polypeptide is Alpha-lactalbumin (LALBA) (Ovis aries (Sheep)).